The primary structure comprises 527 residues: Coiled-coil domain-containing protein 148 (527 aa).

Coiled-coil stretches lie at residues 289 to 353 (LAKD…TEIK) and 401 to 438 (LEKR…VAVQ).

The chain is Coiled-coil domain-containing protein 148 (Ccdc148) from Mus musculus (Mouse).